The primary structure comprises 228 residues: UPF0502 protein Rfer_1648 (228 aa).

Belongs to the UPF0502 family.

The protein is UPF0502 protein Rfer_1648 of Albidiferax ferrireducens (strain ATCC BAA-621 / DSM 15236 / T118) (Rhodoferax ferrireducens).